Reading from the N-terminus, the 308-residue chain is Cis-prenyltransferase 4, chloroplastic (308 aa).

The transit peptide at 1–45 (MAFSLQLQQIFVSYTRFCSQPKSITNPLISLKLPSIHPLAFAQNA) directs the protein to the chloroplast. Aspartate 84 is a catalytic residue.

Belongs to the UPP synthase family. It depends on Mg(2+) as a cofactor. Widely expressed.

The protein localises to the plastid. Its subcellular location is the chloroplast. Its function is as follows. Uses neryl diphosphate and geranyl diphosphate to catalyze the cis-prenyl chain elongation and produce polyprenyl diphosphate with a chain of 55 carbons. In Solanum lycopersicum (Tomato), this protein is Cis-prenyltransferase 4, chloroplastic.